The chain runs to 102 residues: MEIGIAHYLTVSAILFTLGVFGIFLNRKNVIVILMSIELILLSVNLNFVAFSSQLGDLVGQVFALFVLTVAAAEAAIGLAILVVFFRNRGSIAVEDVNVMKG.

The next 3 helical transmembrane spans lie at 5 to 25 (IAHY…GIFL), 31 to 51 (IVIL…FVAF), and 66 to 86 (FVLT…VVFF).

Belongs to the complex I subunit 4L family. As to quaternary structure, NDH-1 is composed of 14 different subunits. Subunits NuoA, H, J, K, L, M, N constitute the membrane sector of the complex.

The protein resides in the cell inner membrane. It catalyses the reaction a quinone + NADH + 5 H(+)(in) = a quinol + NAD(+) + 4 H(+)(out). Its function is as follows. NDH-1 shuttles electrons from NADH, via FMN and iron-sulfur (Fe-S) centers, to quinones in the respiratory chain. The immediate electron acceptor for the enzyme in this species is believed to be ubiquinone. Couples the redox reaction to proton translocation (for every two electrons transferred, four hydrogen ions are translocated across the cytoplasmic membrane), and thus conserves the redox energy in a proton gradient. The polypeptide is NADH-quinone oxidoreductase subunit K (Brucella abortus (strain S19)).